The chain runs to 495 residues: Cobyric acid synthase (495 aa).

Residues 258-427 enclose the GATase cobBQ-type domain; the sequence is GLRVAAVRLP…WHGLFDNDGF (170 aa). Cys-339 serves as the catalytic Nucleophile. Residue His-419 is part of the active site.

The protein belongs to the CobB/CobQ family. CobQ subfamily.

The protein operates within cofactor biosynthesis; adenosylcobalamin biosynthesis. Catalyzes amidations at positions B, D, E, and G on adenosylcobyrinic A,C-diamide. NH(2) groups are provided by glutamine, and one molecule of ATP is hydrogenolyzed for each amidation. In Mycobacterium sp. (strain KMS), this protein is Cobyric acid synthase.